The chain runs to 524 residues: Translation initiation factor eIF2B subunit delta (524 aa).

Positions 1-173 are disordered; sequence MATAAVAVRE…ERQQVPTRKD (173 aa). A2 carries the N-acetylalanine modification. Phosphoserine is present on S12. A compositionally biased stretch (basic and acidic residues) spans 26–40; the sequence is AEGREMTQEEKLQLR. A compositionally biased stretch (basic residues) spans 41 to 51; the sequence is KEKKQQKKKRK. T86 carries the post-translational modification Phosphothreonine. Composition is skewed to basic and acidic residues over residues 87-121 and 161-173; these read AKEKVPAGRSKAELRAERRAKQEAERAMKQARKGD and KKPERQQVPTRKD. A may bind the chemical integrated stress response (ISR) inhibitor ISRIB region spans residues 171–180; sequence RKDYGSKVSL.

It belongs to the eIF-2B alpha/beta/delta subunits family. As to quaternary structure, component of the translation initiation factor 2B (eIF2B) complex which is a heterodecamer of two sets of five different subunits: alpha, beta, gamma, delta and epsilon. Subunits alpha, beta and delta comprise a regulatory subcomplex and subunits epsilon and gamma comprise a catalytic subcomplex. Within the complex, the hexameric regulatory complex resides at the center, with the two heterodimeric catalytic subcomplexes bound on opposite sides.

It localises to the cytoplasm. The protein localises to the cytosol. With respect to regulation, activated by the chemical integrated stress response (ISR) inhibitor ISRIB which stimulates guanine nucleotide exchange factor activity for both phosphorylated and unphosphorylated eIF2. Functionally, acts as a component of the translation initiation factor 2B (eIF2B) complex, which catalyzes the exchange of GDP for GTP on eukaryotic initiation factor 2 (eIF2) gamma subunit. Its guanine nucleotide exchange factor activity is repressed when bound to eIF2 complex phosphorylated on the alpha subunit, thereby limiting the amount of methionyl-initiator methionine tRNA available to the ribosome and consequently global translation is repressed. This chain is Translation initiation factor eIF2B subunit delta (EIF2B4), found in Bos taurus (Bovine).